The primary structure comprises 463 residues: GTPase Der (463 aa).

2 consecutive EngA-type G domains span residues 2-164 and 198-369; these read KKII…PKSK and IKIG…KNYT. GTP-binding positions include 8–15, 55–59, 116–119, 204–211, 251–255, and 315–318; these read GRPNVGKS, DSGGL, NKVD, GRVNVGKS, DTAGI, and NKWD. The KH-like domain occupies 370–454; that stretch reads QKMKTSRLNE…PVILIPKNRS (85 aa).

The protein belongs to the TRAFAC class TrmE-Era-EngA-EngB-Septin-like GTPase superfamily. EngA (Der) GTPase family. As to quaternary structure, associates with the 50S ribosomal subunit.

Its function is as follows. GTPase that plays an essential role in the late steps of ribosome biogenesis. The polypeptide is GTPase Der (Campylobacter fetus subsp. fetus (strain 82-40)).